The primary structure comprises 317 residues: Protein-methionine-sulfoxide reductase catalytic subunit MsrP (317 aa).

The segment at residues 1-40 (MKKLTSNDVTPEEIFYQRRKIIKAFGLSAVATALPTFSFA) is a signal peptide (tat-type signal). Residues Asn-71, 74–75 (YE), Cys-129, Thr-164, Asn-216, Arg-221, and 232–234 (SIK) each bind Mo-molybdopterin.

The protein belongs to the MsrP family. Heterodimer of a catalytic subunit (MsrP) and a heme-binding subunit (MsrQ). Mo-molybdopterin serves as cofactor. Predicted to be exported by the Tat system. The position of the signal peptide cleavage has not been experimentally proven.

It localises to the periplasm. The catalysed reaction is L-methionyl-[protein] + a quinone + H2O = L-methionyl-(S)-S-oxide-[protein] + a quinol. It carries out the reaction L-methionyl-[protein] + a quinone + H2O = L-methionyl-(R)-S-oxide-[protein] + a quinol. Its function is as follows. Part of the MsrPQ system that repairs oxidized periplasmic proteins containing methionine sulfoxide residues (Met-O), using respiratory chain electrons. Thus protects these proteins from oxidative-stress damage caused by reactive species of oxygen and chlorine generated by the host defense mechanisms. MsrPQ is essential for the maintenance of envelope integrity under bleach stress, rescuing a wide series of structurally unrelated periplasmic proteins from methionine oxidation. The catalytic subunit MsrP is non-stereospecific, being able to reduce both (R-) and (S-) diastereoisomers of methionine sulfoxide. The polypeptide is Protein-methionine-sulfoxide reductase catalytic subunit MsrP (Histophilus somni (strain 2336) (Haemophilus somnus)).